The following is a 481-amino-acid chain: Adenosylhomocysteinase (481 aa).

Positions 65, 140, and 200 each coordinate substrate. Position 201–203 (201–203 (TTT)) interacts with NAD(+). Residues K230 and D234 each coordinate substrate. NAD(+) contacts are provided by residues N235, 264-269 (GYGDVG), E287, N322, 343-345 (IGH), and N393.

It belongs to the adenosylhomocysteinase family. It depends on NAD(+) as a cofactor.

The protein resides in the cytoplasm. It catalyses the reaction S-adenosyl-L-homocysteine + H2O = L-homocysteine + adenosine. The protein operates within amino-acid biosynthesis; L-homocysteine biosynthesis; L-homocysteine from S-adenosyl-L-homocysteine: step 1/1. May play a key role in the regulation of the intracellular concentration of adenosylhomocysteine. The chain is Adenosylhomocysteinase from Polynucleobacter asymbioticus (strain DSM 18221 / CIP 109841 / QLW-P1DMWA-1) (Polynucleobacter necessarius subsp. asymbioticus).